The primary structure comprises 127 residues: Major sperm protein 38 (127 aa).

Residue A2 is modified to N-acetylalanine. The MSP domain occupies 9–126; that stretch reads DIQTQPGTKI…RRKNLPIEYN (118 aa).

As to expression, sperm.

It localises to the cell projection. Its subcellular location is the pseudopodium. The protein resides in the cytoplasm. It is found in the cytoskeleton. Its function is as follows. Central component in molecular interactions underlying sperm crawling. Forms an extensive filament system that extends from sperm villipoda, along the leading edge of the pseudopod. This is Major sperm protein 38 (msp-38) from Caenorhabditis elegans.